Reading from the N-terminus, the 187-residue chain is Adenylate kinase (187 aa).

12–17 (GAGKGT) is a binding site for ATP. The segment at 32–61 (STGDIFRANLAENTELGQKARQFMDAGDLV) is NMP. Residues threonine 33, arginine 38, 59-61 (DLV), 87-90 (GYPR), and glutamine 94 each bind AMP. Residues 128–134 (GRGRADD) form an LID region. An ATP-binding site is contributed by arginine 129. Residues arginine 131 and arginine 142 each coordinate AMP. Arginine 170 serves as a coordination point for ATP.

It belongs to the adenylate kinase family. Monomer.

The protein localises to the cytoplasm. The enzyme catalyses AMP + ATP = 2 ADP. Its pathway is purine metabolism; AMP biosynthesis via salvage pathway; AMP from ADP: step 1/1. In terms of biological role, catalyzes the reversible transfer of the terminal phosphate group between ATP and AMP. Plays an important role in cellular energy homeostasis and in adenine nucleotide metabolism. This chain is Adenylate kinase, found in Leuconostoc mesenteroides subsp. mesenteroides (strain ATCC 8293 / DSM 20343 / BCRC 11652 / CCM 1803 / JCM 6124 / NCDO 523 / NBRC 100496 / NCIMB 8023 / NCTC 12954 / NRRL B-1118 / 37Y).